The sequence spans 351 residues: Probable dual-specificity RNA methyltransferase RlmN (351 aa).

Glu-92 serves as the catalytic Proton acceptor. One can recognise a Radical SAM core domain in the interval 98 to 334 (SGDRLTVCVS…VRWSKGLGAD (237 aa)). A disulfide bridge connects residues Cys-105 and Cys-337. [4Fe-4S] cluster is bound by residues Cys-112, Cys-116, and Cys-119. Residues 159 to 160 (GE), Ser-189, 218 to 220 (SLH), and Asn-294 contribute to the S-adenosyl-L-methionine site. The active-site S-methylcysteine intermediate is Cys-337.

This sequence belongs to the radical SAM superfamily. RlmN family. Requires [4Fe-4S] cluster as cofactor.

It localises to the cytoplasm. It carries out the reaction adenosine(2503) in 23S rRNA + 2 reduced [2Fe-2S]-[ferredoxin] + 2 S-adenosyl-L-methionine = 2-methyladenosine(2503) in 23S rRNA + 5'-deoxyadenosine + L-methionine + 2 oxidized [2Fe-2S]-[ferredoxin] + S-adenosyl-L-homocysteine. The catalysed reaction is adenosine(37) in tRNA + 2 reduced [2Fe-2S]-[ferredoxin] + 2 S-adenosyl-L-methionine = 2-methyladenosine(37) in tRNA + 5'-deoxyadenosine + L-methionine + 2 oxidized [2Fe-2S]-[ferredoxin] + S-adenosyl-L-homocysteine. Specifically methylates position 2 of adenine 2503 in 23S rRNA and position 2 of adenine 37 in tRNAs. This is Probable dual-specificity RNA methyltransferase RlmN from Synechococcus sp. (strain ATCC 27144 / PCC 6301 / SAUG 1402/1) (Anacystis nidulans).